The primary structure comprises 102 residues: RNA-binding protein Hfq (102 aa).

In terms of domain architecture, Sm spans 9–68 (DPFLNALRRERVPVSIYLVNGIKLQGQIESFDQFVILLKNTVSQMVYKHAISTVVPSRPV). Positions 63 to 102 (VPSRPVSHHSNNTGGGSNNYHHGSSPAPSSQPQQDSADAE) are disordered. The span at 70–102 (HHSNNTGGGSNNYHHGSSPAPSSQPQQDSADAE) shows a compositional bias: low complexity.

The protein belongs to the Hfq family. As to quaternary structure, homohexamer.

Functionally, RNA chaperone that binds small regulatory RNA (sRNAs) and mRNAs to facilitate mRNA translational regulation in response to envelope stress, environmental stress and changes in metabolite concentrations. Also binds with high specificity to tRNAs. The polypeptide is RNA-binding protein Hfq (Erwinia tasmaniensis (strain DSM 17950 / CFBP 7177 / CIP 109463 / NCPPB 4357 / Et1/99)).